A 286-amino-acid chain; its full sequence is MNHIKNNPVIIIDGSLYLYASYYAFCNLENTSGKPCGAIYGMLKIIDNIFKKYKNLKKIIIIFDSSRKTFRNKLFKEYKKNRSSMPDLLVMQIQPLFEILKKIGIKTLTIPGIEADDVIGSLSYQLEKQGEKILILSHDKDMLQLVTENINIFHKKNNCIITSEIIQEKYGIKPKEFIDFLALMGDATDNIPGVPKIGIKTALFLINKFSNIENIYNNIEKIKSLPLRNAKNISIQLKNNKERALLSYKLARIKLDIPIDIKLKDIILKKYCSKNTFQIFKNYFSS.

The 5'-3' exonuclease domain occupies isoleucine 172–lysine 270.

Functionally, 5'-3' exonuclease acting preferentially on double-stranded DNA. The chain is 5'-3' exonuclease from Buchnera aphidicola subsp. Acyrthosiphon pisum (strain APS) (Acyrthosiphon pisum symbiotic bacterium).